Reading from the N-terminus, the 216-residue chain is Histone doublet H4-H3 (216 aa).

Basic residues predominate over residues 1–12 (MSKAGKKVKAQQ). The segment at 1–23 (MSKAGKKVKAQQHGHLADHVSVG) is disordered.

It localises to the host nucleus. The protein resides in the host cytoplasm. Its subcellular location is the virion. Its function is as follows. Histone-like protein that is recruited to viral factories during viral replication and participates in viral DNA packaging and virion production probably by forming unstable nucleosome-like particles. May compact the viral DNA. The sequence is that of Histone doublet H4-H3 from Melbournevirus (MelV).